Consider the following 152-residue polypeptide: Small heat shock protein HspA (152 aa).

The region spanning 29–139 (TAGEANYPPC…KPRRIPIDNL (111 aa)) is the sHSP domain.

The protein belongs to the small heat shock protein (HSP20) family.

The chain is Small heat shock protein HspA (hspA) from Bradyrhizobium diazoefficiens (strain JCM 10833 / BCRC 13528 / IAM 13628 / NBRC 14792 / USDA 110).